Consider the following 500-residue polypeptide: Aspartyl/glutamyl-tRNA(Asn/Gln) amidotransferase subunit B (500 aa).

This sequence belongs to the GatB/GatE family. GatB subfamily. As to quaternary structure, heterotrimer of A, B and C subunits.

It carries out the reaction L-glutamyl-tRNA(Gln) + L-glutamine + ATP + H2O = L-glutaminyl-tRNA(Gln) + L-glutamate + ADP + phosphate + H(+). The catalysed reaction is L-aspartyl-tRNA(Asn) + L-glutamine + ATP + H2O = L-asparaginyl-tRNA(Asn) + L-glutamate + ADP + phosphate + 2 H(+). In terms of biological role, allows the formation of correctly charged Asn-tRNA(Asn) or Gln-tRNA(Gln) through the transamidation of misacylated Asp-tRNA(Asn) or Glu-tRNA(Gln) in organisms which lack either or both of asparaginyl-tRNA or glutaminyl-tRNA synthetases. The reaction takes place in the presence of glutamine and ATP through an activated phospho-Asp-tRNA(Asn) or phospho-Glu-tRNA(Gln). The sequence is that of Aspartyl/glutamyl-tRNA(Asn/Gln) amidotransferase subunit B from Brucella melitensis biotype 2 (strain ATCC 23457).